A 365-amino-acid chain; its full sequence is 3-isopropylmalate dehydrogenase (365 aa).

Positions 96, 106, 134, and 224 each coordinate substrate. Mg(2+) is bound by residues Asp224, Asp248, and Asp252. 288–300 provides a ligand contact to NAD(+); that stretch reads GSAPTIAKQNIAN.

The protein belongs to the isocitrate and isopropylmalate dehydrogenases family. LeuB type 1 subfamily. In terms of assembly, homodimer. Mg(2+) serves as cofactor. Mn(2+) is required as a cofactor.

It localises to the cytoplasm. It carries out the reaction (2R,3S)-3-isopropylmalate + NAD(+) = 4-methyl-2-oxopentanoate + CO2 + NADH. Its pathway is amino-acid biosynthesis; L-leucine biosynthesis; L-leucine from 3-methyl-2-oxobutanoate: step 3/4. Catalyzes the oxidation of 3-carboxy-2-hydroxy-4-methylpentanoate (3-isopropylmalate) to 3-carboxy-4-methyl-2-oxopentanoate. The product decarboxylates to 4-methyl-2 oxopentanoate. The sequence is that of 3-isopropylmalate dehydrogenase from Dehalococcoides mccartyi (strain ATCC BAA-2266 / KCTC 15142 / 195) (Dehalococcoides ethenogenes (strain 195)).